The following is a 299-amino-acid chain: Lathosterol oxidase (299 aa).

3 consecutive transmembrane segments (helical) span residues 32–52 (VSLL…CATL), 79–99 (FTVK…LLEL), and 117–137 (IHLI…IYWI). One can recognise a Fatty acid hydroxylase domain in the interval 124–252 (ISFLFFTDML…YFTLWDRIGG (129 aa)). A Histidine box-1 motif is present at residues 138–143 (HRGLHH). Residues 151–155 (HKPHH) carry the Histidine box-2 motif. Positions 228 to 233 (HHTDHH) match the Histidine box-3 motif. Ser253 is subject to Phosphoserine.

Belongs to the sterol desaturase family. It depends on Fe cation as a cofactor.

It is found in the endoplasmic reticulum membrane. It carries out the reaction a Delta(7)-sterol + 2 Fe(II)-[cytochrome b5] + O2 + 2 H(+) = a Delta(5),Delta(7)-sterol + 2 Fe(III)-[cytochrome b5] + 2 H2O. It catalyses the reaction lathosterol + 2 Fe(II)-[cytochrome b5] + O2 + 2 H(+) = 7-dehydrocholesterol + 2 Fe(III)-[cytochrome b5] + 2 H2O. The enzyme catalyses 5alpha-cholesta-7,24-dien-3beta-ol + 2 Fe(II)-[cytochrome b5] + O2 + 2 H(+) = 7-dehydrodesmosterol + 2 Fe(III)-[cytochrome b5] + 2 H2O. It functions in the pathway steroid biosynthesis; cholesterol biosynthesis. In terms of biological role, catalyzes the penultimate step of the biosynthesis of cholesterol, the dehydrogenation of lathosterol into 7-dehydrocholesterol (7-DHC). Cholesterol is the major sterol component in mammalian membranes and a precursor for bile acid and steroid hormone synthesis. In addition to its essential role in cholesterol biosynthesis, it also indirectly regulates ferroptosis through the production of 7-DHC. By diverting the spread of damage caused by peroxyl radicals from the phospholipid components to its sterol nucleus, 7-DHC prevents this form of cell death. This chain is Lathosterol oxidase, found in Rattus norvegicus (Rat).